A 284-amino-acid polypeptide reads, in one-letter code: Pantothenate synthetase (284 aa).

34-41 (MGALHAGH) is an ATP binding site. H41 serves as the catalytic Proton donor. (R)-pantoate is bound at residue Q65. Q65 is a beta-alanine binding site. ATP is bound at residue 151 to 154 (GEKD). A (R)-pantoate-binding site is contributed by Q157. Residues L180 and 188–191 (MSSR) contribute to the ATP site.

The protein belongs to the pantothenate synthetase family. As to quaternary structure, homodimer.

The protein resides in the cytoplasm. It catalyses the reaction (R)-pantoate + beta-alanine + ATP = (R)-pantothenate + AMP + diphosphate + H(+). The protein operates within cofactor biosynthesis; (R)-pantothenate biosynthesis; (R)-pantothenate from (R)-pantoate and beta-alanine: step 1/1. In terms of biological role, catalyzes the condensation of pantoate with beta-alanine in an ATP-dependent reaction via a pantoyl-adenylate intermediate. The sequence is that of Pantothenate synthetase from Paramagnetospirillum magneticum (strain ATCC 700264 / AMB-1) (Magnetospirillum magneticum).